The primary structure comprises 75 residues: Porwaprin-b (75 aa).

The N-terminal stretch at 1–24 (MSSGGLLLLLGLLTLWAELTPVSG) is a signal peptide. In terms of domain architecture, WAP spans 27–72 (RPVKPGLCPPRPQKPPCVKECKNDWSCRGEQKCCHYGCIYECRDPI). Intrachain disulfides connect cysteine 34-cysteine 60, cysteine 43-cysteine 64, cysteine 47-cysteine 59, and cysteine 53-cysteine 68.

This sequence belongs to the venom waprin family. In terms of tissue distribution, expressed by the venom gland.

It localises to the secreted. Functionally, damages membranes of susceptible bacteria. Has no hemolytic activity. Not toxic to mice. Does not inhibit the proteinases elastase and cathepsin G. The sequence is that of Porwaprin-b from Pseudechis porphyriacus (Red-bellied black snake).